We begin with the raw amino-acid sequence, 168 residues long: ATP synthase subunit b (168 aa).

A helical membrane pass occupies residues 11 to 31; sequence NTVLGNIIVVSGAFIILLVLL.

This sequence belongs to the ATPase B chain family. In terms of assembly, F-type ATPases have 2 components, F(1) - the catalytic core - and F(0) - the membrane proton channel. F(1) has five subunits: alpha(3), beta(3), gamma(1), delta(1), epsilon(1). F(0) has three main subunits: a(1), b(2) and c(10-14). The alpha and beta chains form an alternating ring which encloses part of the gamma chain. F(1) is attached to F(0) by a central stalk formed by the gamma and epsilon chains, while a peripheral stalk is formed by the delta and b chains.

The protein resides in the cell membrane. In terms of biological role, f(1)F(0) ATP synthase produces ATP from ADP in the presence of a proton or sodium gradient. F-type ATPases consist of two structural domains, F(1) containing the extramembraneous catalytic core and F(0) containing the membrane proton channel, linked together by a central stalk and a peripheral stalk. During catalysis, ATP synthesis in the catalytic domain of F(1) is coupled via a rotary mechanism of the central stalk subunits to proton translocation. Its function is as follows. Component of the F(0) channel, it forms part of the peripheral stalk, linking F(1) to F(0). In Lactococcus lactis subsp. lactis (strain IL1403) (Streptococcus lactis), this protein is ATP synthase subunit b.